A 1586-amino-acid polypeptide reads, in one-letter code: Pentafunctional AROM polypeptide (1586 aa).

Positions 1–384 (MSEPTKISIL…HEPKASVVSN (384 aa)) are 3-dehydroquinate synthase. NAD(+) is bound by residues 44 to 46 (DTN), 81 to 84 (ESSK), 114 to 116 (GGV), and Asp119. Position 130 (Arg130) interacts with 7-phospho-2-dehydro-3-deoxy-D-arabino-heptonate. 139–140 (TT) is an NAD(+) binding site. 2 residues coordinate 7-phospho-2-dehydro-3-deoxy-D-arabino-heptonate: Asp146 and Lys152. Position 161 (Lys161) interacts with NAD(+). 7-phospho-2-dehydro-3-deoxy-D-arabino-heptonate is bound at residue Asn162. NAD(+) is bound by residues 179-182 (FLET) and Asn190. Glu194 serves as a coordination point for Zn(2+). 7-phospho-2-dehydro-3-deoxy-D-arabino-heptonate is bound by residues 194–197 (EVIK) and Lys250. Glu260 functions as the Proton acceptor; for 3-dehydroquinate synthase activity in the catalytic mechanism. 7-phospho-2-dehydro-3-deoxy-D-arabino-heptonate-binding positions include 264-268 (RNLLN) and His271. Residue His271 coordinates Zn(2+). Residue His275 is the Proton acceptor; for 3-dehydroquinate synthase activity of the active site. Residues His287 and Lys356 each coordinate 7-phospho-2-dehydro-3-deoxy-D-arabino-heptonate. His287 is a binding site for Zn(2+). Residues 397–842 (VHPGVPKSLN…WDALKQMFSV (446 aa)) form an EPSP synthase region. Catalysis depends on Cys824, which acts as the For EPSP synthase activity. The segment at 864 to 1056 (SASVFIIGMR…KKKKHSFFVS (193 aa)) is shikimate kinase. 871–878 (GMRGAGKT) is an ATP binding site. A 3-dehydroquinase region spans residues 1057-1277 (LTLPDVEPSG…AAPGQLSAAE (221 aa)). Residue His1180 is the Proton acceptor; for 3-dehydroquinate dehydratase activity of the active site. The active-site Schiff-base intermediate with substrate; for 3-dehydroquinate dehydratase activity is the Lys1208. Residues 1290–1586 (AQKFAIFGSP…SKHLDYFLSF (297 aa)) form a shikimate dehydrogenase region.

The protein in the N-terminal section; belongs to the sugar phosphate cyclases superfamily. Dehydroquinate synthase family. This sequence in the 2nd section; belongs to the EPSP synthase family. It in the 3rd section; belongs to the shikimate kinase family. In the 4th section; belongs to the type-I 3-dehydroquinase family. The protein in the C-terminal section; belongs to the shikimate dehydrogenase family. As to quaternary structure, homodimer. It depends on Zn(2+) as a cofactor.

It localises to the cytoplasm. It carries out the reaction 7-phospho-2-dehydro-3-deoxy-D-arabino-heptonate = 3-dehydroquinate + phosphate. The enzyme catalyses 3-dehydroquinate = 3-dehydroshikimate + H2O. It catalyses the reaction shikimate + NADP(+) = 3-dehydroshikimate + NADPH + H(+). The catalysed reaction is shikimate + ATP = 3-phosphoshikimate + ADP + H(+). It carries out the reaction 3-phosphoshikimate + phosphoenolpyruvate = 5-O-(1-carboxyvinyl)-3-phosphoshikimate + phosphate. Its pathway is metabolic intermediate biosynthesis; chorismate biosynthesis; chorismate from D-erythrose 4-phosphate and phosphoenolpyruvate: step 2/7. It participates in metabolic intermediate biosynthesis; chorismate biosynthesis; chorismate from D-erythrose 4-phosphate and phosphoenolpyruvate: step 3/7. It functions in the pathway metabolic intermediate biosynthesis; chorismate biosynthesis; chorismate from D-erythrose 4-phosphate and phosphoenolpyruvate: step 4/7. The protein operates within metabolic intermediate biosynthesis; chorismate biosynthesis; chorismate from D-erythrose 4-phosphate and phosphoenolpyruvate: step 5/7. Its pathway is metabolic intermediate biosynthesis; chorismate biosynthesis; chorismate from D-erythrose 4-phosphate and phosphoenolpyruvate: step 6/7. Its function is as follows. The AROM polypeptide catalyzes 5 consecutive enzymatic reactions in prechorismate polyaromatic amino acid biosynthesis. The chain is Pentafunctional AROM polypeptide from Penicillium rubens (strain ATCC 28089 / DSM 1075 / NRRL 1951 / Wisconsin 54-1255) (Penicillium chrysogenum).